The primary structure comprises 222 residues: Transmembrane reductase CYB561D2 (222 aa).

Residues A2–T17 lie on the Cytoplasmic side of the membrane. Positions A14–R217 constitute a Cytochrome b561 domain. A helical transmembrane segment spans residues A18–A38. Residues R39 to S46 lie on the Lumenal side of the membrane. The helical transmembrane segment at W47 to F67 threads the bilayer. H48 serves as a coordination point for heme b. Residues S68 to C85 are Cytoplasmic-facing. Positions 86 and 120 each coordinate heme b. The chain crosses the membrane as a helical span at residues H86–L106. Topologically, residues H107–Q122 are lumenal. Residues A123–Y143 traverse the membrane as a helical segment. Over P144–S162 the chain is Cytoplasmic. Heme b is bound at residue H159. The helical transmembrane segment at G163–F183 threads the bilayer. The Lumenal portion of the chain corresponds to T184 to S186. The chain crosses the membrane as a helical span at residues V187–M207. Residues N208–P222 lie on the Cytoplasmic side of the membrane.

Heme b serves as cofactor.

It localises to the endoplasmic reticulum membrane. The protein resides in the cytoplasmic vesicle membrane. It carries out the reaction monodehydro-L-ascorbate radical(out) + L-ascorbate(in) = monodehydro-L-ascorbate radical(in) + L-ascorbate(out). It catalyses the reaction Fe(3+)(out) + L-ascorbate(in) = monodehydro-L-ascorbate radical(in) + Fe(2+)(out) + H(+). Functionally, transmembrane reductase that may use ascorbate as an electron donor in the cytoplasm and transfer electrons across endoplasmic reticulum membranes to reduce monodehydro-L-ascorbate radical and iron cations Fe(3+) in the lumen of that compartment. This Homo sapiens (Human) protein is Transmembrane reductase CYB561D2.